A 1203-amino-acid polypeptide reads, in one-letter code: Metabotropic glutamate receptor 5 (1203 aa).

A signal peptide spans 1–20; the sequence is MVLLLILSVLLLKEDVRGSA. Residues 21–579 lie on the Extracellular side of the membrane; sequence QSSERRVVAH…QYLRWGDPEP (559 aa). Cysteine 57 and cysteine 99 are disulfide-bonded. Tyrosine 64 is an L-glutamate binding site. N-linked (GlcNAc...) asparagine glycosylation occurs at asparagine 88. L-glutamate contacts are provided by residues serine 151 and 172–174; that span reads SAT. Asparagine 209 is a glycosylation site (N-linked (GlcNAc...) asparagine). Position 222 (tyrosine 222) interacts with L-glutamate. Intrachain disulfides connect cysteine 240-cysteine 529, cysteine 275-cysteine 277, cysteine 364-cysteine 380, cysteine 418-cysteine 425, cysteine 510-cysteine 530, cysteine 514-cysteine 533, cysteine 536-cysteine 548, and cysteine 551-cysteine 564. Residue aspartate 304 coordinates L-glutamate. Asparagine 377 and asparagine 381 each carry an N-linked (GlcNAc...) asparagine glycan. Lysine 395 serves as a coordination point for L-glutamate. Asparagine 444 carries an N-linked (GlcNAc...) asparagine glycan. The helical transmembrane segment at 580 to 602 threads the bilayer; sequence IAAVVFACLGLLATLFVTVIFII. Topologically, residues 603–612 are cytoplasmic; it reads YRDTPVVKSS. Residues 613–635 traverse the membrane as a helical segment; the sequence is SRELCYIILAGICLGYLCTFCLI. The Extracellular segment spans residues 636 to 643; that stretch reads AKPKQIYC. An intrachain disulfide couples cysteine 643 to cysteine 732. A helical transmembrane segment spans residues 644 to 666; sequence YLQRIGIGLSPAMSYSALVTKTN. At 667–692 the chain is on the cytoplasmic side; it reads RIARILAGSKKKICTKKPRFMSACAQ. Residues 693–713 traverse the membrane as a helical segment; that stretch reads LVIAFILICIQLGIIVALFIM. The Extracellular segment spans residues 714-736; that stretch reads EPPDIMHDYPSIREVYLICNTTN. Asparagine 733 is a glycosylation site (N-linked (GlcNAc...) asparagine). A helical membrane pass occupies residues 737–758; it reads LGVVTPLGYNGLLILSCTFYAF. Residues 759–771 are Cytoplasmic-facing; that stretch reads KTRNVPANFNEAK. Residues 772 to 794 traverse the membrane as a helical segment; it reads YIAFTMYTTCIIWLAFVPIYFGS. Over 795–797 the chain is Extracellular; the sequence is NYK. The helical transmembrane segment at 798 to 819 threads the bilayer; it reads IITMCFSVSLSATVALGCMFVP. The Cytoplasmic segment spans residues 820–1203; the sequence is KVYIILAKPE…RDYTQSSSSL (384 aa). Residue serine 860 is modified to Phosphoserine. Arginine 868 carries the omega-N-methylarginine modification. 3 disordered regions span residues 892-970, 1003-1054, and 1122-1182; these read FTPK…GSGP, EESF…GSLM, and GAQG…ALCI. The segment covering 905 to 920 has biased composition (polar residues); the sequence is TMSSSNGKSVTWAQNE. Arginine 924 is subject to Omega-N-methylarginine. A compositionally biased stretch (low complexity) spans 1007–1017; that stretch reads PAAARPRSPSP. Phosphoserine is present on residues serine 1014 and serine 1016. Polar residues-rich tracts occupy residues 1039 to 1054 and 1165 to 1176; these read HSET…GSLM and DSGSTTPNSPVS.

This sequence belongs to the G-protein coupled receptor 3 family. Interacts with RYR1, RYR2, ITPR1, SHANK1 and SHANK3. The PPXXF motif binds HOMER1, HOMER2 and HOMER3. Interacts with SIAH1 and TAMALIN. Interacts with NCDN. Interacts with NECAB2. Interacts with CAMK2A. Widely distributed in neuronal cells of the central nervous system.

The protein localises to the cell membrane. In terms of biological role, G-protein coupled receptor for glutamate. Ligand binding causes a conformation change that triggers signaling via guanine nucleotide-binding proteins (G proteins) and modulates the activity of down-stream effectors. Signaling activates a phosphatidylinositol-calcium second messenger system and generates a calcium-activated chloride current. Plays an important role in the regulation of synaptic plasticity and the modulation of the neural network activity. The protein is Metabotropic glutamate receptor 5 (Grm5) of Rattus norvegicus (Rat).